The chain runs to 508 residues: Phenylalanine--tRNA ligase alpha subunit (508 aa).

Ala-2 bears the N-acetylalanine mark. Residue Thr-190 is modified to Phosphothreonine. Residues Ser-193 and Ser-301 each carry the phosphoserine modification. Lys-311 is modified (N6-acetyllysine). Residues Thr-329, 372–374 (QIE), and Tyr-412 contribute to the L-phenylalanine site. Glu-414 provides a ligand contact to Mg(2+). Phe-438 is a binding site for L-phenylalanine.

It belongs to the class-II aminoacyl-tRNA synthetase family. Phe-tRNA synthetase alpha subunit type 2 subfamily. As to quaternary structure, heterotetramer; dimer of two heterodimers formed by FARSA and FARSB.

The protein localises to the cytoplasm. It catalyses the reaction tRNA(Phe) + L-phenylalanine + ATP = L-phenylalanyl-tRNA(Phe) + AMP + diphosphate + H(+). This chain is Phenylalanine--tRNA ligase alpha subunit (FARSA), found in Homo sapiens (Human).